Reading from the N-terminus, the 29-residue chain is Cyclotide mela-7 (29 aa).

The segment at residues 1-29 is a cross-link (cyclopeptide (Gly-Asn)); sequence GLPTCGETCFKGKCYTPGCSCSYPICKKN. Disulfide bonds link Cys5–Cys19, Cys9–Cys21, and Cys14–Cys26.

Post-translationally, this is a cyclic peptide. In terms of processing, contains 3 disulfide bonds.

Its function is as follows. Probably participates in a plant defense mechanism (Potential). Binds to and induces leakage in phospholipd membranes, particularly ones containing 1-palmitoyl-2-oleophosphatidylethanolamine (POPE). In vitro, displays cytotoxicity against cultured cells but no hemolytic activity towards fresh erythrocytes. Not active against Gram-negative bacterium E.coli ATCC 25922 or Gram-positive bacterium S.aureus ATCC 25923 up to a concentration of 64 uM. The chain is Cyclotide mela-7 from Melicytus latifolius (Norfolk Island mahoe).